The following is a 152-amino-acid chain: uncharacterized protein (152 aa).

This is an uncharacterized protein from Rickettsia prowazekii (strain Madrid E).